Here is a 500-residue protein sequence, read N- to C-terminus: 5-taurinomethyluridine-[tRNA] synthase subunit GTPB3, mitochondrial (500 aa).

The transit peptide at 1 to 73 (MHFISCCLRR…RRLTRSLPAP (73 aa)) directs the protein to the mitochondrion. Residues R53, E111, and K151 each contribute to the 5,10-methylenetetrahydrofolate site. The region spanning 248–422 (GVHVVIAGST…LLTLLHNTLK (175 aa)) is the TrmE-type G domain. GTP is bound by residues 255-262 (GSTNAGKS), 281-285 (GTTRD), 302-305 (DTAG), and 373-376 (NESD). N258 contributes to the K(+) binding site. S262 and T283 together coordinate Mg(2+). K500 is a 5,10-methylenetetrahydrofolate binding site.

It belongs to the TRAFAC class TrmE-Era-EngA-EngB-Septin-like GTPase superfamily. TrmE GTPase family. The cofactor is K(+).

It localises to the mitochondrion. It catalyses the reaction GTP + H2O = GDP + phosphate + H(+). In terms of biological role, GTPase component of the GTPBP3-MTO1 complex that catalyzes the 5-taurinomethyluridine (taum(5)U) modification at the 34th wobble position (U34) of mitochondrial tRNAs (mt-tRNAs), which plays a role in mt-tRNA decoding and mitochondrial translation. Taum(5)U formation on mammalian mt-tRNA requires the presence of both GTPBP3-mediated GTPase activity and MTO1 catalytic activity. This chain is 5-taurinomethyluridine-[tRNA] synthase subunit GTPB3, mitochondrial (gtpbp3), found in Danio rerio (Zebrafish).